A 558-amino-acid polypeptide reads, in one-letter code: Atlastin-1 (558 aa).

Residues M1 to V29 are disordered. The segment at M1–P34 is N-terminal hypervariable region (HVR). Residues M1–A449 are Cytoplasmic-facing. S10, S22, and S23 each carry phosphoserine. The GB1/RHD3-type G domain occupies D64–S309. GDP-binding residues include R77, K78, G79, K80, S81, F82, Q148, R217, D218, V276, and N279. Residues R77, K78, G79, K80, S81, and F82 each contribute to the GTP site. Position 81 (S81) interacts with Mg(2+). 3 residues coordinate GTP: R217, D218, and V276. A 3HB (three-helix bundle) domain region spans residues M347–S438. An N6-acetyllysine modification is found at K395. A coiled-coil region spans residues E412–K439. A linker region spans residues K439–T447. The helical transmembrane segment at T450–L470 threads the bilayer. A topological domain (lumenal) is located at residue D471. Residues I472 to A492 form a helical membrane-spanning segment. Over Y493–I558 the chain is Cytoplasmic. The tract at residues N521–I558 is autoinhibitory domain.

The protein belongs to the TRAFAC class dynamin-like GTPase superfamily. GB1/RHD3 GTPase family. GB1 subfamily. Monomeric and homodimeric. The homodimer, transiently formed by two molecules on opposing membranes, is the active form mediating ER membrane fusion. Interacts with REEP1, REEP5, RTN3 and RTN4 (via the transmembrane region); these proteins are involved in endoplasmic reticulum tubular network organization. Interacts with ZFYVE27; both proteins are involved in endoplasmic reticulum tubular network organization. Interacts with ARL6IP1; both proteins are involved in endoplasmic reticulum tubular network organization. Interacts with SPAST; the interaction is direct, could recruit SPAST to Golgi membranes. Interacts (via N-terminal region) with MAP4K4 (via CNH regulatory domain). May interact with TMED2. Interacts with CPT1C. Post-translationally, phosphorylated. Phosphorylation, by different kinases, of the N-terminal hypervariable region (HVR) regulates the ATL1-mediated membrane tethering step. Detected in brain where it is abundant in lamina V of the cerebral cortex. Also expressed within the hippocampus, mainly in pyramidal neurons in CA1 and CA3. Weakly expressed in the striatum and more robustly in amygdala and several thalamic nuclei. Also detected in several mesopontine nuclei (at protein level).

The protein localises to the endoplasmic reticulum membrane. Its subcellular location is the golgi apparatus membrane. It is found in the cell projection. It localises to the axon. It catalyses the reaction GTP + H2O = GDP + phosphate + H(+). Functionally, atlastin-1 (ATL1) is a membrane-anchored GTPase that mediates the GTP-dependent fusion of endoplasmic reticulum (ER) membranes, maintaining the continuous ER network. It facilitates the formation of three-way junctions where ER tubules intersect. Two atlastin-1 on neighboring ER tubules bind GTP and form loose homodimers through the GB1/RHD3-type G domains and 3HB regions. Upon GTP hydrolysis, the 3HB regions tighten, pulling the membranes together to drive their fusion. After fusion, the homodimer disassembles upon release of inorganic phosphate (Pi). Subsequently, GDP dissociates, resetting the monomers to a conformation ready for a new fusion cycle. May also regulate more or less directly Golgi biogenesis. Indirectly regulates axonal development. The polypeptide is Atlastin-1 (Rattus norvegicus (Rat)).